The primary structure comprises 296 residues: Peptide transport system permease protein SapC (296 aa).

At 1-28 (MPYDSVYSEKRPPGTLRTAWRKFYSDAP) the chain is on the cytoplasmic side. A helical transmembrane segment spans residues 29–49 (AMVGLYGCAGLALLCIFGGWI). The Periplasmic portion of the chain corresponds to 50–98 (APYGIDQQFLGYQLLPPSWSRYGEVSFFLGTDDLGRDVLSRLLSGAAPT). Residues 99–119 (VGGAFIVTLAATLCGLVLGVV) form a helical membrane-spanning segment. An ABC transmembrane type-1 domain is found at 99–284 (VGGAFIVTLA…LSVLLVNLLG (186 aa)). At 120-133 (AGATHGLRSAVLNH) the chain is on the cytoplasmic side. Residues 134 to 154 (ILDTLLSIPSLLLAIIVVAFA) form a helical membrane-spanning segment. Residues 155–196 (GPHLSHAMFAVWLALLPRMVRSVYSMVHDELEKEYVIAARLD) are Periplasmic-facing. A helical transmembrane segment spans residues 197-217 (GATTLNILWFAILPNITAGLV). The Cytoplasmic portion of the chain corresponds to 218-222 (TEITR). The chain crosses the membrane as a helical span at residues 223–243 (ALSMAILDIAALGFLDLGAQL). Residues 244 to 257 (PSPEWGAMLGDALE) lie on the Periplasmic side of the membrane. The chain crosses the membrane as a helical span at residues 258 to 278 (LIYVAPWTVMLPGAAITLSVL). The Cytoplasmic portion of the chain corresponds to 279 to 296 (LVNLLGDGIRRAIIAGVE).

This sequence belongs to the binding-protein-dependent transport system permease family. OppBC subfamily.

It localises to the cell inner membrane. In terms of biological role, involved in a peptide intake transport system that plays a role in the resistance to antimicrobial peptides. In Salmonella typhi, this protein is Peptide transport system permease protein SapC (sapC).